A 532-amino-acid chain; its full sequence is Autoinducer-2 kinase (532 aa).

This sequence belongs to the FGGY kinase family.

The protein resides in the cytoplasm. The catalysed reaction is (S)-4,5-dihydroxypentane-2,3-dione + ATP = (2S)-2-hydroxy-3,4-dioxopentyl phosphate + ADP + H(+). Catalyzes the phosphorylation of autoinducer-2 (AI-2) to phospho-AI-2, which subsequently inactivates the transcriptional regulator LsrR and leads to the transcription of the lsr operon. Phosphorylates the ring-open form of (S)-4,5-dihydroxypentane-2,3-dione (DPD), which is the precursor to all AI-2 signaling molecules, at the C5 position. This Klebsiella pneumoniae subsp. pneumoniae (strain ATCC 700721 / MGH 78578) protein is Autoinducer-2 kinase.